A 488-amino-acid polypeptide reads, in one-letter code: (S)-N-methylcoclaurine 3'-hydroxylase isozyme 2 (488 aa).

The chain crosses the membrane as a helical span at residues V3–S23. Heme is bound at residue C430.

Belongs to the cytochrome P450 family. It depends on heme as a cofactor.

The protein resides in the endoplasmic reticulum membrane. Its subcellular location is the microsome membrane. It carries out the reaction (S)-N-methylcoclaurine + reduced [NADPH--hemoprotein reductase] + O2 = (S)-3'-hydroxy-N-methylcoclaurine + oxidized [NADPH--hemoprotein reductase] + H2O + H(+). The protein operates within alkaloid biosynthesis; (S)-reticuline biosynthesis; (S)-reticuline from (S)-norcoclaurine: step 3/4. In terms of biological role, 3'-hydroxylation of (S)-N-methylcoclaurine. This is (S)-N-methylcoclaurine 3'-hydroxylase isozyme 2 (CYP80B2) from Eschscholzia californica (California poppy).